Consider the following 206-residue polypeptide: Uracil phosphoribosyltransferase (206 aa).

Residues Arg76, Arg101, and 128–136 contribute to the 5-phospho-alpha-D-ribose 1-diphosphate site; that span reads DPMLATGTT. Residues Ile191 and 196-198 contribute to the uracil site; that span reads GDA. Asp197 contributes to the 5-phospho-alpha-D-ribose 1-diphosphate binding site.

It belongs to the UPRTase family. It depends on Mg(2+) as a cofactor.

The enzyme catalyses UMP + diphosphate = 5-phospho-alpha-D-ribose 1-diphosphate + uracil. The protein operates within pyrimidine metabolism; UMP biosynthesis via salvage pathway; UMP from uracil: step 1/1. Its activity is regulated as follows. Allosterically activated by GTP. In terms of biological role, catalyzes the conversion of uracil and 5-phospho-alpha-D-ribose 1-diphosphate (PRPP) to UMP and diphosphate. The polypeptide is Uracil phosphoribosyltransferase (Mycoplasma genitalium (strain ATCC 33530 / DSM 19775 / NCTC 10195 / G37) (Mycoplasmoides genitalium)).